The chain runs to 200 residues: MLSHERRLWADGYERVAGLDEAGRGCLAGPVVAAAVIMPPQVEITAIQDSKALSEGQRLDARATIEDEAVAASIARCSPTEIDDRNILQAALEAMRRAASGCRPPPDFVLVDGNQWDRNLVDAPWPHETVVKGDAKSQSIAAASILAKTERDALMRDLHEAHPEYDWASNVGYPTQQHYDALREHGATPHHRQSFTLFRD.

An RNase H type-2 domain is found at 14 to 200 (ERVAGLDEAG…HRQSFTLFRD (187 aa)). Residues aspartate 20, glutamate 21, and aspartate 112 each contribute to the a divalent metal cation site.

This sequence belongs to the RNase HII family. It depends on Mn(2+) as a cofactor. The cofactor is Mg(2+).

It is found in the cytoplasm. The catalysed reaction is Endonucleolytic cleavage to 5'-phosphomonoester.. Its function is as follows. Endonuclease that specifically degrades the RNA of RNA-DNA hybrids. This chain is Ribonuclease HII, found in Salinibacter ruber (strain DSM 13855 / M31).